The following is a 404-amino-acid chain: Probable tRNA sulfurtransferase (404 aa).

The THUMP domain occupies 61–166; sequence QTLVTGLPKI…HDATYMMAQV (106 aa). Residues 184–185, 209–210, Arg266, Gly288, and Gln297 contribute to the ATP site; these read ML and HF.

This sequence belongs to the ThiI family.

The protein resides in the cytoplasm. The catalysed reaction is [ThiI sulfur-carrier protein]-S-sulfanyl-L-cysteine + a uridine in tRNA + 2 reduced [2Fe-2S]-[ferredoxin] + ATP + H(+) = [ThiI sulfur-carrier protein]-L-cysteine + a 4-thiouridine in tRNA + 2 oxidized [2Fe-2S]-[ferredoxin] + AMP + diphosphate. It carries out the reaction [ThiS sulfur-carrier protein]-C-terminal Gly-Gly-AMP + S-sulfanyl-L-cysteinyl-[cysteine desulfurase] + AH2 = [ThiS sulfur-carrier protein]-C-terminal-Gly-aminoethanethioate + L-cysteinyl-[cysteine desulfurase] + A + AMP + 2 H(+). Its pathway is cofactor biosynthesis; thiamine diphosphate biosynthesis. Its function is as follows. Catalyzes the ATP-dependent transfer of a sulfur to tRNA to produce 4-thiouridine in position 8 of tRNAs, which functions as a near-UV photosensor. Also catalyzes the transfer of sulfur to the sulfur carrier protein ThiS, forming ThiS-thiocarboxylate. This is a step in the synthesis of thiazole, in the thiamine biosynthesis pathway. The sulfur is donated as persulfide by IscS. In Lysinibacillus sphaericus (strain C3-41), this protein is Probable tRNA sulfurtransferase.